A 264-amino-acid polypeptide reads, in one-letter code: Thymidylate synthase (264 aa).

DUMP is bound at residue arginine 21. (6R)-5,10-methylene-5,6,7,8-tetrahydrofolate is bound at residue histidine 51. A dUMP-binding site is contributed by 126–127 (RR). The active-site Nucleophile is cysteine 146. Residues 166-169 (RSAD), asparagine 177, and 207-209 (HLY) contribute to the dUMP site. (6R)-5,10-methylene-5,6,7,8-tetrahydrofolate is bound at residue aspartate 169. Serine 263 contributes to the (6R)-5,10-methylene-5,6,7,8-tetrahydrofolate binding site.

It belongs to the thymidylate synthase family. Bacterial-type ThyA subfamily. In terms of assembly, homodimer.

It localises to the cytoplasm. It carries out the reaction dUMP + (6R)-5,10-methylene-5,6,7,8-tetrahydrofolate = 7,8-dihydrofolate + dTMP. The protein operates within pyrimidine metabolism; dTTP biosynthesis. Catalyzes the reductive methylation of 2'-deoxyuridine-5'-monophosphate (dUMP) to 2'-deoxythymidine-5'-monophosphate (dTMP) while utilizing 5,10-methylenetetrahydrofolate (mTHF) as the methyl donor and reductant in the reaction, yielding dihydrofolate (DHF) as a by-product. This enzymatic reaction provides an intracellular de novo source of dTMP, an essential precursor for DNA biosynthesis. The polypeptide is Thymidylate synthase (Neisseria meningitidis serogroup B (strain ATCC BAA-335 / MC58)).